We begin with the raw amino-acid sequence, 538 residues long: Putative cysteine ligase BshC (538 aa).

Positions 248–268 (ISKYKEVQEGLRNQQEVIKEL) form a coiled coil.

The protein belongs to the BshC family.

Functionally, involved in bacillithiol (BSH) biosynthesis. May catalyze the last step of the pathway, the addition of cysteine to glucosamine malate (GlcN-Mal) to generate BSH. This Bacillus cereus (strain B4264) protein is Putative cysteine ligase BshC.